The primary structure comprises 285 residues: Golgi phosphoprotein 3-like (285 aa).

The segment at 1 to 39 is disordered; that stretch reads MTTLTHRARRTEVGKNSEKKVESEENVNQDRNQDNEDIG. The span at 10-23 shows a compositional bias: basic and acidic residues; it reads RTEVGKNSEKKVES. Positions 67 and 76 each coordinate a 1,2-diacyl-sn-glycero-3-phospho-(1D-myo-inositol 4-phosphate). Position 112 is a phosphoserine (Ser112). The a 1,2-diacyl-sn-glycero-3-phospho-(1D-myo-inositol 4-phosphate) site is built by Arg157 and Arg160. The tract at residues 176–187 is beta-hairpin required for oligomerization; it reads EKQNFLLFDMTT.

It belongs to the GOLPH3/VPS74 family. In terms of assembly, homooligomer. Does not interact MYO18; differs from GOLPH3 by its inability to interact with MYO18. May interact with ARF1.

It is found in the golgi apparatus. The protein localises to the golgi stack membrane. Its subcellular location is the trans-Golgi network membrane. Functionally, phosphatidylinositol-4-phosphate-binding protein that may antagonize the action of GOLPH3 which is required for the process of vesicle budding at the Golgi and anterograde transport to the plasma membrane. In Bos taurus (Bovine), this protein is Golgi phosphoprotein 3-like (GOLPH3L).